We begin with the raw amino-acid sequence, 56 residues long: Protein hunchback (56 aa).

3 consecutive C2H2-type zinc fingers follow at residues 1 to 5, 11 to 33, and 39 to 56; these read HLRNH, FKCD…LKSH, and FRCS…SLKL.

This sequence belongs to the hunchback C2H2-type zinc-finger protein family.

It is found in the nucleus. Gap class segmentation protein that controls development of head structures. In Euscelis plebejus (Leafhopper), this protein is Protein hunchback (hb).